A 462-amino-acid polypeptide reads, in one-letter code: A-type ATP synthase subunit B (462 aa).

The protein belongs to the ATPase alpha/beta chains family. In terms of assembly, has multiple subunits with at least A(3), B(3), C, D, E, F, H, I and proteolipid K(x).

Its subcellular location is the cell membrane. In terms of biological role, component of the A-type ATP synthase that produces ATP from ADP in the presence of a proton gradient across the membrane. The B chain is a regulatory subunit. The chain is A-type ATP synthase subunit B from Cenarchaeum symbiosum (strain A).